The following is a 115-amino-acid chain: Succinate dehydrogenase hydrophobic membrane anchor subunit (115 aa).

At 1 to 15 (MVSNASALGRNGVHD) the chain is on the cytoplasmic side. A helical membrane pass occupies residues 16-36 (FILVRATAIVLTLYIIYMVGF). Over 37–58 (FATSGELTYEVWIGFFASAFTK) the chain is Periplasmic. A helical transmembrane segment spans residues 59-80 (VFTLLALFSILIHAWIGMWQVL). A heme-binding site is contributed by His-71. Residues 81–90 (TDYVKPLALR) are Cytoplasmic-facing. Tyr-83 provides a ligand contact to a ubiquinone. A helical transmembrane segment spans residues 91–115 (LMLQLVIVVALVVYVIYGFVVVWGV).

Part of an enzyme complex containing four subunits: a flavoprotein, an iron-sulfur protein, plus two membrane-anchoring proteins, SdhC and SdhD. The complex can form homotrimers. Heme is required as a cofactor.

It is found in the cell inner membrane. Its pathway is carbohydrate metabolism; tricarboxylic acid cycle. Its function is as follows. Membrane-anchoring subunit of succinate dehydrogenase (SDH). The sequence is that of Succinate dehydrogenase hydrophobic membrane anchor subunit (sdhD) from Escherichia coli O6:H1 (strain CFT073 / ATCC 700928 / UPEC).